Here is a 214-residue protein sequence, read N- to C-terminus: Octanoyltransferase (214 aa).

One can recognise a BPL/LPL catalytic domain in the interval 35–211 (KSNMNFIWLG…IIHEEFNFNF (177 aa)). Residues 75 to 82 (RGGEVTCH), 142 to 144 (SIG), and 155 to 157 (GFS) contribute to the substrate site. The active-site Acyl-thioester intermediate is cysteine 173.

It belongs to the LipB family.

Its subcellular location is the cytoplasm. It catalyses the reaction octanoyl-[ACP] + L-lysyl-[protein] = N(6)-octanoyl-L-lysyl-[protein] + holo-[ACP] + H(+). The protein operates within protein modification; protein lipoylation via endogenous pathway; protein N(6)-(lipoyl)lysine from octanoyl-[acyl-carrier-protein]: step 1/2. Catalyzes the transfer of endogenously produced octanoic acid from octanoyl-acyl-carrier-protein onto the lipoyl domains of lipoate-dependent enzymes. Lipoyl-ACP can also act as a substrate although octanoyl-ACP is likely to be the physiological substrate. In Prochlorococcus marinus subsp. pastoris (strain CCMP1986 / NIES-2087 / MED4), this protein is Octanoyltransferase.